A 266-amino-acid chain; its full sequence is Thymidylate synthase (266 aa).

Arg24 lines the dUMP pocket. His54 contacts (6R)-5,10-methylene-5,6,7,8-tetrahydrofolate. 129–130 (RR) contacts dUMP. Cys149 acts as the Nucleophile in catalysis. DUMP is bound by residues 169–172 (RSAD), Asn180, and 210–212 (HIY). Asp172 contributes to the (6R)-5,10-methylene-5,6,7,8-tetrahydrofolate binding site. Residue Ala265 participates in (6R)-5,10-methylene-5,6,7,8-tetrahydrofolate binding.

Belongs to the thymidylate synthase family. Bacterial-type ThyA subfamily. As to quaternary structure, homodimer.

Its subcellular location is the cytoplasm. It catalyses the reaction dUMP + (6R)-5,10-methylene-5,6,7,8-tetrahydrofolate = 7,8-dihydrofolate + dTMP. It participates in pyrimidine metabolism; dTTP biosynthesis. In terms of biological role, catalyzes the reductive methylation of 2'-deoxyuridine-5'-monophosphate (dUMP) to 2'-deoxythymidine-5'-monophosphate (dTMP) while utilizing 5,10-methylenetetrahydrofolate (mTHF) as the methyl donor and reductant in the reaction, yielding dihydrofolate (DHF) as a by-product. This enzymatic reaction provides an intracellular de novo source of dTMP, an essential precursor for DNA biosynthesis. In Nocardia farcinica (strain IFM 10152), this protein is Thymidylate synthase.